The following is a 357-amino-acid chain: Biotin synthase (357 aa).

The segment at M1 to T27 is disordered. Residues A9–T27 are compositionally biased toward low complexity. The Radical SAM core domain maps to D78–R303. Residues C93, C97, and C100 each contribute to the [4Fe-4S] cluster site. [2Fe-2S] cluster is bound by residues C136, C228, and R298.

This sequence belongs to the radical SAM superfamily. Biotin synthase family. In terms of assembly, homodimer. Requires [4Fe-4S] cluster as cofactor. The cofactor is [2Fe-2S] cluster.

The enzyme catalyses (4R,5S)-dethiobiotin + (sulfur carrier)-SH + 2 reduced [2Fe-2S]-[ferredoxin] + 2 S-adenosyl-L-methionine = (sulfur carrier)-H + biotin + 2 5'-deoxyadenosine + 2 L-methionine + 2 oxidized [2Fe-2S]-[ferredoxin]. It participates in cofactor biosynthesis; biotin biosynthesis; biotin from 7,8-diaminononanoate: step 2/2. Catalyzes the conversion of dethiobiotin (DTB) to biotin by the insertion of a sulfur atom into dethiobiotin via a radical-based mechanism. The protein is Biotin synthase of Corynebacterium jeikeium (strain K411).